The sequence spans 375 residues: Anhydro-N-acetylmuramic acid kinase 1 (375 aa).

20 to 27 (GTSFDGVD) contacts ATP. Residues 351-375 (APSTTGVAAPVGGGRRSKPGARELS) are disordered.

It belongs to the anhydro-N-acetylmuramic acid kinase family.

It carries out the reaction 1,6-anhydro-N-acetyl-beta-muramate + ATP + H2O = N-acetyl-D-muramate 6-phosphate + ADP + H(+). It functions in the pathway amino-sugar metabolism; 1,6-anhydro-N-acetylmuramate degradation. It participates in cell wall biogenesis; peptidoglycan recycling. Functionally, catalyzes the specific phosphorylation of 1,6-anhydro-N-acetylmuramic acid (anhMurNAc) with the simultaneous cleavage of the 1,6-anhydro ring, generating MurNAc-6-P. Is required for the utilization of anhMurNAc either imported from the medium or derived from its own cell wall murein, and thus plays a role in cell wall recycling. This Jannaschia sp. (strain CCS1) protein is Anhydro-N-acetylmuramic acid kinase 1.